The following is a 695-amino-acid chain: Nucleoprotein (695 aa).

Coiled-coil stretches lie at residues 316–341 (VNVGEQYQQLREAAHDAEVKLQRRHE) and 372–399 (QTLAVLSQKREKLARLAAEIENNIVEDQ). The tract at residues 424-611 (QARPMNRPTA…SPSAPQEDTR (188 aa)) is disordered. Over residues 438–447 (VDDKIEHEST) the composition is skewed to basic and acidic residues. Composition is skewed to polar residues over residues 495–505 (RQSQDLNNSQG) and 537–552 (TTDSQESIDQPGSDNE). Positions 603-606 (PSAP) match the PTAP/PSAP motif motif.

It belongs to the filoviruses nucleoprotein family. As to quaternary structure, homooligomer. Homomultimerizes to form the nucleocapsid. Binds to viral genomic RNA. Interacts with VP35 and VP30 to form the nucleocapsid. Also interacts with VP24 and VP40. Post-translationally, phosphorylated.

The protein localises to the virion. The protein resides in the host cytoplasm. Its function is as follows. Encapsidates the genome, protecting it from nucleases. The encapsidated genomic RNA is termed the nucleocapsid and serves as template for transcription and replication. During replication, encapsidation by NP is coupled to RNA synthesis and all replicative products are resistant to nucleases. The chain is Nucleoprotein (NP) from Chlorocebus aethiops (Green monkey).